The chain runs to 96 residues: Putative pterin-4-alpha-carbinolamine dehydratase (96 aa).

The protein belongs to the pterin-4-alpha-carbinolamine dehydratase family.

The catalysed reaction is (4aS,6R)-4a-hydroxy-L-erythro-5,6,7,8-tetrahydrobiopterin = (6R)-L-erythro-6,7-dihydrobiopterin + H2O. The sequence is that of Putative pterin-4-alpha-carbinolamine dehydratase from Herpetosiphon aurantiacus (strain ATCC 23779 / DSM 785 / 114-95).